A 261-amino-acid chain; its full sequence is Ribonuclease PH (261 aa).

Phosphate contacts are provided by residues Arg-87 and 125-127 (GTR).

It belongs to the RNase PH family. Homohexameric ring arranged as a trimer of dimers.

It carries out the reaction tRNA(n+1) + phosphate = tRNA(n) + a ribonucleoside 5'-diphosphate. Its function is as follows. Phosphorolytic 3'-5' exoribonuclease that plays an important role in tRNA 3'-end maturation. Removes nucleotide residues following the 3'-CCA terminus of tRNAs; can also add nucleotides to the ends of RNA molecules by using nucleoside diphosphates as substrates, but this may not be physiologically important. Probably plays a role in initiation of 16S rRNA degradation (leading to ribosome degradation) during starvation. This chain is Ribonuclease PH, found in Desulforudis audaxviator (strain MP104C).